We begin with the raw amino-acid sequence, 152 residues long: Small ribosomal subunit protein uS13 (152 aa).

It belongs to the universal ribosomal protein uS13 family.

The protein localises to the cytoplasm. Its function is as follows. Located at the top of the head of the 40S subunit, it contacts several helices of the 18S rRNA. This chain is Small ribosomal subunit protein uS13 (RPS18), found in Argopecten irradians (Bay scallop).